A 303-amino-acid chain; its full sequence is ATP phosphoribosyltransferase (303 aa).

Belongs to the ATP phosphoribosyltransferase family. Long subfamily. Mg(2+) serves as cofactor.

Its subcellular location is the cytoplasm. It catalyses the reaction 1-(5-phospho-beta-D-ribosyl)-ATP + diphosphate = 5-phospho-alpha-D-ribose 1-diphosphate + ATP. It functions in the pathway amino-acid biosynthesis; L-histidine biosynthesis; L-histidine from 5-phospho-alpha-D-ribose 1-diphosphate: step 1/9. With respect to regulation, feedback inhibited by histidine. In terms of biological role, catalyzes the condensation of ATP and 5-phosphoribose 1-diphosphate to form N'-(5'-phosphoribosyl)-ATP (PR-ATP). Has a crucial role in the pathway because the rate of histidine biosynthesis seems to be controlled primarily by regulation of HisG enzymatic activity. This chain is ATP phosphoribosyltransferase, found in Stenotrophomonas maltophilia (strain R551-3).